We begin with the raw amino-acid sequence, 61 residues long: Large ribosomal subunit protein uL30 (61 aa).

Belongs to the universal ribosomal protein uL30 family. In terms of assembly, part of the 50S ribosomal subunit.

This chain is Large ribosomal subunit protein uL30, found in Corynebacterium diphtheriae (strain ATCC 700971 / NCTC 13129 / Biotype gravis).